Here is a 209-residue protein sequence, read N- to C-terminus: MGKVHVLDHPLIQHKLSYIRDKHTGTKEFRELVDEVAALMAFEVTRDLPLEAAEIETPVGPAKVKKLAGKKLGLVPILRAGIGMSEGILRMIPAARVGHVGLYRDPETLKPHEYYVKLPNDVEERELLVIDPMLATGGSVVEAINSLKKRGAKSMRLICLVAAPEGVAYVQKEHPDVDIYLAALDEKLNEKGYIVPGLGDAGDRLFGTK.

5-phospho-alpha-D-ribose 1-diphosphate-binding positions include Arg-79, Arg-104, and 131–139 (DPMLATGGS). Residues Ile-194 and 199-201 (GDA) each bind uracil. Asp-200 contributes to the 5-phospho-alpha-D-ribose 1-diphosphate binding site.

It belongs to the UPRTase family. Mg(2+) is required as a cofactor.

It carries out the reaction UMP + diphosphate = 5-phospho-alpha-D-ribose 1-diphosphate + uracil. The protein operates within pyrimidine metabolism; UMP biosynthesis via salvage pathway; UMP from uracil: step 1/1. Allosterically activated by GTP. Catalyzes the conversion of uracil and 5-phospho-alpha-D-ribose 1-diphosphate (PRPP) to UMP and diphosphate. The polypeptide is Uracil phosphoribosyltransferase (Shouchella clausii (strain KSM-K16) (Alkalihalobacillus clausii)).